The chain runs to 94 residues: MRAVYILAMACAATLQASSSALPSTKDLNSQVESLVPSDITDSAHVGGVRLLRVEDKEEETEEERGFGGALADGLKKLNPAKAAKKAKEKSCEN.

Residues 1–21 (MRAVYILAMACAATLQASSSA) form the signal peptide. The RxLR-dEER motif lies at 50-65 (RLLRVEDKEEETEEER).

Belongs to the RxLR effector family.

The protein localises to the secreted. It localises to the host cytoplasm. It is found in the host nucleus. In terms of biological role, effector that enhances P.infestans colonization of Nicotiana benthamiana leaves. This is RxLR effector protein PITG_15972 from Phytophthora infestans (strain T30-4) (Potato late blight agent).